A 393-amino-acid polypeptide reads, in one-letter code: Putative zinc metalloprotease Rip3 (393 aa).

The next 2 membrane-spanning stretches (helical) occupy residues 10 to 30 (IAGF…LFTW) and 45 to 65 (AVVY…SLLA). Residue H66 coordinates Zn(2+). The active site involves E67. Position 70 (H70) interacts with Zn(2+). The next 4 helical transmembrane spans lie at 77-97 (AGVS…ALGG), 108-128 (IAFA…ALAI), 136-156 (PAIV…LGLF), and 207-227 (FVAG…FIFA). CBS domains lie at 251–308 (MTAQ…RRST) and 315–376 (ALPL…AQPE).

The protein belongs to the peptidase M50B family. Zn(2+) serves as cofactor.

It is found in the cell membrane. The sequence is that of Putative zinc metalloprotease Rip3 (rip3) from Mycobacterium tuberculosis (strain ATCC 35801 / TMC 107 / Erdman).